The sequence spans 249 residues: Diaminopimelate epimerase (249 aa).

Substrate is bound by residues asparagine 11 and asparagine 60. The active-site Proton donor is the cysteine 69. Residues 70–71 (GN), asparagine 164, and 182–183 (ER) each bind substrate. Catalysis depends on cysteine 192, which acts as the Proton acceptor. Residue 193–194 (GT) coordinates substrate.

The protein belongs to the diaminopimelate epimerase family. In terms of assembly, homodimer.

It localises to the cytoplasm. It carries out the reaction (2S,6S)-2,6-diaminopimelate = meso-2,6-diaminopimelate. It functions in the pathway amino-acid biosynthesis; L-lysine biosynthesis via DAP pathway; DL-2,6-diaminopimelate from LL-2,6-diaminopimelate: step 1/1. In terms of biological role, catalyzes the stereoinversion of LL-2,6-diaminopimelate (L,L-DAP) to meso-diaminopimelate (meso-DAP), a precursor of L-lysine and an essential component of the bacterial peptidoglycan. The sequence is that of Diaminopimelate epimerase from Campylobacter lari (strain RM2100 / D67 / ATCC BAA-1060).